A 234-amino-acid polypeptide reads, in one-letter code: Purine nucleoside phosphorylase DeoD-type (234 aa).

H5 is an a purine D-ribonucleoside binding site. Phosphate contacts are provided by residues G21, R25, R44, and R88–T91. Residues E178–E180 and S202–D203 contribute to the a purine D-ribonucleoside site. Catalysis depends on D203, which acts as the Proton donor.

The protein belongs to the PNP/UDP phosphorylase family. Homohexamer; trimer of homodimers.

It carries out the reaction a purine D-ribonucleoside + phosphate = a purine nucleobase + alpha-D-ribose 1-phosphate. The enzyme catalyses a purine 2'-deoxy-D-ribonucleoside + phosphate = a purine nucleobase + 2-deoxy-alpha-D-ribose 1-phosphate. Catalyzes the reversible phosphorolytic breakdown of the N-glycosidic bond in the beta-(deoxy)ribonucleoside molecules, with the formation of the corresponding free purine bases and pentose-1-phosphate. The polypeptide is Purine nucleoside phosphorylase DeoD-type (Lactococcus lactis subsp. cremoris (strain MG1363)).